The primary structure comprises 654 residues: Glycogen debranching enzyme (654 aa).

D336 acts as the Nucleophile in catalysis. The active-site Proton donor is the E371. The segment at 459-484 (EANGEENRDGTNSNYSDNHGKEGLGG) is disordered.

This sequence belongs to the glycosyl hydrolase 13 family.

It catalyses the reaction Hydrolysis of (1-&gt;6)-alpha-D-glucosidic linkages to branches with degrees of polymerization of three or four glucose residues in limit dextrin.. The protein operates within glycan degradation; glycogen degradation. Removes maltotriose and maltotetraose chains that are attached by 1,6-alpha-linkage to the limit dextrin main chain, generating a debranched limit dextrin. In Salmonella typhi, this protein is Glycogen debranching enzyme.